Consider the following 108-residue polypeptide: uncharacterized protein (108 aa).

Helical transmembrane passes span 36–56 (LAIM…DKMI), 58–78 (FIFV…KLLF), and 88–108 (IVFL…FFNL).

Its subcellular location is the cell membrane. This is an uncharacterized protein from Alkalihalophilus pseudofirmus (strain ATCC BAA-2126 / JCM 17055 / OF4) (Bacillus pseudofirmus).